The following is a 421-amino-acid chain: Glutamate dehydrogenase (421 aa).

Residue K105 is part of the active site. 220–226 (GYGNAGY) is a binding site for NAD(+).

It belongs to the Glu/Leu/Phe/Val dehydrogenases family. Homohexamer.

The protein resides in the cytoplasm. It localises to the chromosome. It catalyses the reaction L-glutamate + NAD(+) + H2O = 2-oxoglutarate + NH4(+) + NADH + H(+). The catalysed reaction is L-glutamate + NADP(+) + H2O = 2-oxoglutarate + NH4(+) + NADPH + H(+). The polypeptide is Glutamate dehydrogenase (gdhA) (Thermococcus kodakarensis (strain ATCC BAA-918 / JCM 12380 / KOD1) (Pyrococcus kodakaraensis (strain KOD1))).